The chain runs to 159 residues: MARRNKARKRKISPDSRYDSVLLMRFINVIMKYGKKSVAEKIVYNALSSAEKEVNERGVSIFETAVENVTPSVEVRSRRIGGATYQVPVEVKKDRAVSLALRWIVKSASAMRKKSGKGFFKCLCSEILDAYNKRGGAFKMCEEKYKMAEANKAFSHLRF.

The protein belongs to the universal ribosomal protein uS7 family. Part of the 30S ribosomal subunit. Contacts proteins S9 and S11.

Functionally, one of the primary rRNA binding proteins, it binds directly to 16S rRNA where it nucleates assembly of the head domain of the 30S subunit. Is located at the subunit interface close to the decoding center, probably blocks exit of the E-site tRNA. This is Small ribosomal subunit protein uS7 from Wolbachia sp. subsp. Brugia malayi (strain TRS).